A 360-amino-acid polypeptide reads, in one-letter code: Protein MGF 360-1L (360 aa).

Belongs to the asfivirus MGF 360 family.

Functionally, plays a role in virus cell tropism, and may be required for efficient virus replication in macrophages. In Ornithodoros (relapsing fever ticks), this protein is Protein MGF 360-1L.